The sequence spans 80 residues: Large ribosomal subunit protein bL31B (80 aa).

It belongs to the bacterial ribosomal protein bL31 family. Type B subfamily. Part of the 50S ribosomal subunit.

This is Large ribosomal subunit protein bL31B from Streptococcus sanguinis (strain SK36).